Here is a 96-residue protein sequence, read N- to C-terminus: UPF0235 protein YggU (96 aa).

This sequence belongs to the UPF0235 family.

This Salmonella newport (strain SL254) protein is UPF0235 protein YggU.